The primary structure comprises 428 residues: Dihydroorotase (428 aa).

Residues H59 and H61 each coordinate Zn(2+). Substrate-binding positions include 61-63 (HLR) and N93. D151, H178, and H231 together coordinate Zn(2+). Residue N277 participates in substrate binding. A Zn(2+)-binding site is contributed by D304. D304 is a catalytic residue. Substrate contacts are provided by residues H308 and 322–323 (FG).

The protein belongs to the metallo-dependent hydrolases superfamily. DHOase family. Class I DHOase subfamily. Zn(2+) is required as a cofactor.

The enzyme catalyses (S)-dihydroorotate + H2O = N-carbamoyl-L-aspartate + H(+). It participates in pyrimidine metabolism; UMP biosynthesis via de novo pathway; (S)-dihydroorotate from bicarbonate: step 3/3. Catalyzes the reversible cyclization of carbamoyl aspartate to dihydroorotate. In Bacillus cereus (strain ATCC 14579 / DSM 31 / CCUG 7414 / JCM 2152 / NBRC 15305 / NCIMB 9373 / NCTC 2599 / NRRL B-3711), this protein is Dihydroorotase.